The chain runs to 447 residues: Gamma-glutamyl phosphate reductase (447 aa).

The protein belongs to the gamma-glutamyl phosphate reductase family.

Its subcellular location is the cytoplasm. It catalyses the reaction L-glutamate 5-semialdehyde + phosphate + NADP(+) = L-glutamyl 5-phosphate + NADPH + H(+). The protein operates within amino-acid biosynthesis; L-proline biosynthesis; L-glutamate 5-semialdehyde from L-glutamate: step 2/2. In terms of biological role, catalyzes the NADPH-dependent reduction of L-glutamate 5-phosphate into L-glutamate 5-semialdehyde and phosphate. The product spontaneously undergoes cyclization to form 1-pyrroline-5-carboxylate. The chain is Gamma-glutamyl phosphate reductase from Methanosarcina acetivorans (strain ATCC 35395 / DSM 2834 / JCM 12185 / C2A).